We begin with the raw amino-acid sequence, 196 residues long: MTQPIKLLVGLANPGPEYAKTRHNAGAWVVEELARVHNVTLKNEPKFFGLTGRIMVNGQDLRLLIPTTFMNLSGKAIAALAKFYQIKPEEIMVAHDELDLPPGVAKFKKGGGHGGHNGLRDTISKLGNNKDFYRLRIGIGHPGHKDKVAGFVLGKAPAKEQELLDAAADEAVRSLDILIKDGLSKAQNRLHTFKAE.

Position 18 (tyrosine 18) interacts with tRNA. The Proton acceptor role is filled by histidine 23. TRNA is bound by residues phenylalanine 69, asparagine 71, and asparagine 117.

The protein belongs to the PTH family. Monomer.

It is found in the cytoplasm. The catalysed reaction is an N-acyl-L-alpha-aminoacyl-tRNA + H2O = an N-acyl-L-amino acid + a tRNA + H(+). Hydrolyzes ribosome-free peptidyl-tRNAs (with 1 or more amino acids incorporated), which drop off the ribosome during protein synthesis, or as a result of ribosome stalling. Its function is as follows. Catalyzes the release of premature peptidyl moieties from peptidyl-tRNA molecules trapped in stalled 50S ribosomal subunits, and thus maintains levels of free tRNAs and 50S ribosomes. This Vibrio parahaemolyticus serotype O3:K6 (strain RIMD 2210633) protein is Peptidyl-tRNA hydrolase.